Consider the following 338-residue polypeptide: D-erythrose-4-phosphate dehydrogenase (338 aa).

11 to 12 is an NAD(+) binding site; sequence RI. Substrate contacts are provided by residues 153–155, arginine 199, 212–213, and arginine 235; these read SCT and TK. The active-site Nucleophile is cysteine 154. Asparagine 317 is an NAD(+) binding site.

Belongs to the glyceraldehyde-3-phosphate dehydrogenase family. Epd subfamily. As to quaternary structure, homotetramer.

It is found in the cytoplasm. The catalysed reaction is D-erythrose 4-phosphate + NAD(+) + H2O = 4-phospho-D-erythronate + NADH + 2 H(+). Its pathway is cofactor biosynthesis; pyridoxine 5'-phosphate biosynthesis; pyridoxine 5'-phosphate from D-erythrose 4-phosphate: step 1/5. Its function is as follows. Catalyzes the NAD-dependent conversion of D-erythrose 4-phosphate to 4-phosphoerythronate. In Shewanella piezotolerans (strain WP3 / JCM 13877), this protein is D-erythrose-4-phosphate dehydrogenase.